A 345-amino-acid chain; its full sequence is MAEANERSKEMARSNSCVFPRDLLQRFISNSVEGEDDDEEEDDDEIELNLGLSLGGRFGVDKSNKLVRSSSVVVTMPLFREDHHHHQAAAMITTKVSTETVAGATRGTGLMRTTSLPAESEEEWRKRKEMQTLRRMAAKRRRSEKLRTGVGGGNSNNPEEAATATASRRRGRPSSGLPRWSATANKSGLLRQHSAGLDSLQVSGESLGGGRAAGSSSSVSELETKASSDEARSLPSTTQPQQETTTKPTNRLRRLSSVDMNMKMEPQGKGKSEMPCVFTKGDGPNGKRVDGILYRYGSGEEVRIMCVCHGDFLSPADFVKHAGGPHVDHPLRHIVVNTSSPSNLL.

Disordered regions lie at residues 114–185 (TSLP…ATAN) and 201–256 (QVSG…RRLS). Basic and acidic residues-rich tracts occupy residues 123-132 (EWRKRKEMQT) and 222-232 (LETKASSDEAR). The span at 235–249 (PSTTQPQQETTTKPT) shows a compositional bias: low complexity.

Belongs to the Ninja family. As to quaternary structure, forms a heterodimer with AFP2. Interacts with ABI5/DPBF1, DPBF2, AREB3/DPBF3, ABF1, ABF3/DPBF5 and ABF4/AREB2.

It is found in the nucleus. In terms of biological role, acts as a negative regulator of abscisic acid (ABA) response during germination through the ubiquitin-mediated proteolysis of ABI5/DPBF1. This chain is Ninja-family protein AFP1 (AFP1), found in Arabidopsis thaliana (Mouse-ear cress).